The sequence spans 380 residues: Gonadotropin-releasing hormone II receptor (380 aa).

The Extracellular portion of the chain corresponds to 1–40 (MSAVNGTPWGSSAREEVWAGSGVEVEGSELPTFSTAAKVR). Residues 41–60 (VGVTIVLFVSSAGGNLAVLW) traverse the membrane as a helical segment. Residues 61-76 (SVTRPQPSQLRPSPVR) are Cytoplasmic-facing. Residues 77-96 (RLFAHLAAADLLVTFVVMPL) traverse the membrane as a helical segment. The Extracellular portion of the chain corresponds to 97-114 (DATWNITVQWLAGDIACR). N-linked (GlcNAc...) asparagine glycosylation occurs at N101. C113 and C188 are joined by a disulfide. Residues 115 to 136 (TLMFLKLMAMYAAAFLPVVIGL) traverse the membrane as a helical segment. At 137–160 (DRQAAVLNPLGSRSGVRKLLGAAW) the chain is on the cytoplasmic side. A helical transmembrane segment spans residues 161–178 (GLSFLLALPQLFLFHTVH). The Extracellular portion of the chain corresponds to 179–204 (RAGPVPFTQCATKGSFKARWQETTYN). Residues 205–224 (LFTFCCLFLLPLTAMAICYS) form a helical membrane-spanning segment. Residues 225–278 (RIVLGVSSPRTRKGSHAPAGEFALRRSFDNRPRVRLRALRLALLVLLTFILCWT) are Cytoplasmic-facing. The helical transmembrane segment at 279 to 297 (PYYLLGLWYWFSPSMLSEV) threads the bilayer. Residues 298 to 303 (PPSLSH) lie on the Extracellular side of the membrane. A helical transmembrane segment spans residues 304-323 (ILFLFGLLNAPLDPLLYGAF). The Cytoplasmic segment spans residues 324 to 380 (TLGCRRGHQELSMDSSREEGSRRMFQQDIQALRQTEVQKTVTSRKAGETKDIPITSI).

The protein belongs to the G-protein coupled receptor 1 family. In terms of processing, phosphorylated on the C-terminal cytoplasmic tail.

Its subcellular location is the cell membrane. In terms of biological role, receptor for gonadotropin releasing hormone II (GnRH II). This receptor mediates its action by association with G proteins that activate a phosphatidylinositol-calcium second messenger system. This Callithrix jacchus (White-tufted-ear marmoset) protein is Gonadotropin-releasing hormone II receptor (GNRHR2).